The sequence spans 480 residues: Proline--tRNA ligase (480 aa).

It belongs to the class-II aminoacyl-tRNA synthetase family. ProS type 3 subfamily. In terms of assembly, homodimer.

It is found in the cytoplasm. The enzyme catalyses tRNA(Pro) + L-proline + ATP = L-prolyl-tRNA(Pro) + AMP + diphosphate. Its function is as follows. Catalyzes the attachment of proline to tRNA(Pro) in a two-step reaction: proline is first activated by ATP to form Pro-AMP and then transferred to the acceptor end of tRNA(Pro). The sequence is that of Proline--tRNA ligase from Pyrococcus abyssi (strain GE5 / Orsay).